Consider the following 223-residue polypeptide: Putative NAD(P)H nitroreductase SAUSA300_2462 (223 aa).

It belongs to the nitroreductase family. Requires FMN as cofactor.

The sequence is that of Putative NAD(P)H nitroreductase SAUSA300_2462 from Staphylococcus aureus (strain USA300).